The chain runs to 114 residues: Nucleoid-associated protein Tlet_0999 (114 aa).

Belongs to the YbaB/EbfC family. As to quaternary structure, homodimer.

The protein localises to the cytoplasm. The protein resides in the nucleoid. Functionally, binds to DNA and alters its conformation. May be involved in regulation of gene expression, nucleoid organization and DNA protection. This Pseudothermotoga lettingae (strain ATCC BAA-301 / DSM 14385 / NBRC 107922 / TMO) (Thermotoga lettingae) protein is Nucleoid-associated protein Tlet_0999.